The following is a 165-amino-acid chain: Nucleotide-binding protein Cagg_1607 (165 aa).

Belongs to the YajQ family.

Nucleotide-binding protein. This Chloroflexus aggregans (strain MD-66 / DSM 9485) protein is Nucleotide-binding protein Cagg_1607.